The primary structure comprises 373 residues: Glutamine synthetase (373 aa).

At Ala-2 the chain carries N-acetylalanine. Residues 2–25 (ATSASSHLNKGIKQMYMSLPQGEK) form a required for glutamine-induced ubiquitination by CRL4(CRBN) and proteasomal degradation region. Lys-11 and Lys-14 each carry N6-acetyllysine. A GS beta-grasp domain is found at 24 to 106 (EKVQAMYIWV…VLCEVFKYNR (83 aa)). Phosphotyrosine is present on Tyr-104. In terms of domain architecture, GS catalytic spans 113 to 373 (LRHICKRIMD…TGDEPFQYKN (261 aa)). Glu-134 serves as a coordination point for ATP. Mn(2+) contacts are provided by Glu-134, Glu-136, Glu-196, and Glu-203. 203–208 (EFQIGP) is an ATP binding site. An L-glutamate-binding site is contributed by 246–247 (NW). His-253 contacts Mn(2+). ATP is bound by residues 255–257 (NFS), Arg-319, and Arg-324. Arg-319 contributes to the L-glutamate binding site. 336–338 (YFE) is a binding site for ADP. Glu-338 provides a ligand contact to Mn(2+). Residue Arg-340 participates in L-glutamate binding. Residue Ser-343 is modified to Phosphoserine.

The protein belongs to the glutamine synthetase family. Decamer; composed of two pentamers. Interacts with PALMD. Interacts with RHOJ. Interacts with BEST2; this interaction tethers a fraction of GLUL to the membrane, causing a decrease of cytosolic glutamine synthase (GS) activity and inhibits the chloride channel activity of BEST2 by affecting the gating at the aperture in the absence of intracellular glutamate. The cofactor is Mg(2+). Mn(2+) serves as cofactor. Acetylated by EP300/p300; acetylation is stimulated by increased glutamine levels and promotes ubiquitin-mediated proteasomal degradation. In terms of processing, palmitoylated; undergoes autopalmitoylation. Post-translationally, ubiquitinated by ZNRF1. Ubiquitinated by the DCX (DDB1-CUL4-X-box) E3 ubiquitin-protein ligase complex called CRL4(CRBN), leading to proteasomal degradation. Expressed in microvascular endothelial cells.

It is found in the cytoplasm. It localises to the cytosol. The protein resides in the microsome. The protein localises to the mitochondrion. Its subcellular location is the cell membrane. It catalyses the reaction L-glutamate + NH4(+) + ATP = L-glutamine + ADP + phosphate + H(+). It carries out the reaction L-cysteinyl-[protein] + hexadecanoyl-CoA = S-hexadecanoyl-L-cysteinyl-[protein] + CoA. Its activity is regulated as follows. Glutamine synthetase activity is inhibited by methionine sulfoximine (MSO). In terms of biological role, glutamine synthetase that catalyzes the ATP-dependent conversion of glutamate and ammonia to glutamine. Its role depends on tissue localization: in the brain, it regulates the levels of toxic ammonia and converts neurotoxic glutamate to harmless glutamine, whereas in the liver, it is one of the enzymes responsible for the removal of ammonia. Plays a key role in ammonium detoxification during erythropoiesis: the glutamine synthetase activity is required to remove ammonium generated by porphobilinogen deaminase (HMBS) during heme biosynthesis to prevent ammonium accumulation and oxidative stress. Essential for proliferation of fetal skin fibroblasts. Independently of its glutamine synthetase activity, required for endothelial cell migration during vascular development. Involved in angiogenesis by regulating membrane localization and activation of the GTPase RHOJ, possibly by promoting RHOJ palmitoylation. May act as a palmitoyltransferase for RHOJ: able to autopalmitoylate and then transfer the palmitoyl group to RHOJ. Plays a role in ribosomal 40S subunit biogenesis. Through the interaction with BEST2, inhibits BEST2 channel activity by affecting the gating at the aperture in the absence of intracellular L-glutamate, but sensitizes BEST2 to intracellular L-glutamate, which promotes the opening of BEST2 and thus relieves its inhibitory effect on BEST2. This Mus musculus (Mouse) protein is Glutamine synthetase.